The chain runs to 260 residues: Ubiquinone/menaquinone biosynthesis C-methyltransferase UbiE (260 aa).

S-adenosyl-L-methionine is bound by residues Thr-83, Asp-104, and 132–133; that span reads NA.

The protein belongs to the class I-like SAM-binding methyltransferase superfamily. MenG/UbiE family.

It catalyses the reaction a 2-demethylmenaquinol + S-adenosyl-L-methionine = a menaquinol + S-adenosyl-L-homocysteine + H(+). The catalysed reaction is a 2-methoxy-6-(all-trans-polyprenyl)benzene-1,4-diol + S-adenosyl-L-methionine = a 5-methoxy-2-methyl-3-(all-trans-polyprenyl)benzene-1,4-diol + S-adenosyl-L-homocysteine + H(+). The protein operates within quinol/quinone metabolism; menaquinone biosynthesis; menaquinol from 1,4-dihydroxy-2-naphthoate: step 2/2. It participates in cofactor biosynthesis; ubiquinone biosynthesis. In terms of biological role, methyltransferase required for the conversion of demethylmenaquinol (DMKH2) to menaquinol (MKH2) and the conversion of 2-polyprenyl-6-methoxy-1,4-benzoquinol (DDMQH2) to 2-polyprenyl-3-methyl-6-methoxy-1,4-benzoquinol (DMQH2). This chain is Ubiquinone/menaquinone biosynthesis C-methyltransferase UbiE, found in Bartonella bacilliformis (strain ATCC 35685 / KC583 / Herrer 020/F12,63).